The sequence spans 345 residues: Uroporphyrinogen decarboxylase (345 aa).

Residues 27–31 (RQAGR), phenylalanine 46, aspartate 76, tyrosine 152, serine 207, and histidine 320 contribute to the substrate site.

It belongs to the uroporphyrinogen decarboxylase family. Homodimer.

It is found in the cytoplasm. The catalysed reaction is uroporphyrinogen III + 4 H(+) = coproporphyrinogen III + 4 CO2. It participates in porphyrin-containing compound metabolism; protoporphyrin-IX biosynthesis; coproporphyrinogen-III from 5-aminolevulinate: step 4/4. In terms of biological role, catalyzes the decarboxylation of four acetate groups of uroporphyrinogen-III to yield coproporphyrinogen-III. In Oceanobacillus iheyensis (strain DSM 14371 / CIP 107618 / JCM 11309 / KCTC 3954 / HTE831), this protein is Uroporphyrinogen decarboxylase.